A 310-amino-acid polypeptide reads, in one-letter code: L-lactate dehydrogenase (310 aa).

3 residues coordinate NAD(+): Val11, Asp32, and Arg37. Residues Gln79, Arg85, and Asn117 to Asp120 contribute to the substrate site. Residues Val115–Asn117 and Thr140 each bind NAD(+). Residue Asp145–Arg148 participates in substrate binding. Beta-D-fructose 1,6-bisphosphate-binding residues include Arg150 and His165. Residue His172 is the Proton acceptor of the active site. A Phosphotyrosine modification is found at Tyr221. Position 230 (Thr230) interacts with substrate.

This sequence belongs to the LDH/MDH superfamily. LDH family. As to quaternary structure, homotetramer.

Its subcellular location is the cytoplasm. The catalysed reaction is (S)-lactate + NAD(+) = pyruvate + NADH + H(+). The protein operates within fermentation; pyruvate fermentation to lactate; (S)-lactate from pyruvate: step 1/1. Allosterically activated by fructose 1,6-bisphosphate (FBP). Functionally, catalyzes the conversion of lactate to pyruvate. This is L-lactate dehydrogenase from Fervidobacterium nodosum (strain ATCC 35602 / DSM 5306 / Rt17-B1).